We begin with the raw amino-acid sequence, 258 residues long: Type III pantothenate kinase (258 aa).

An ATP-binding site is contributed by 7–14 (DVGNTRLK). Substrate-binding positions include Y96 and 103-106 (GADR). D105 functions as the Proton acceptor in the catalytic mechanism. Residue T133 coordinates ATP. Residue T183 coordinates substrate.

It belongs to the type III pantothenate kinase family. In terms of assembly, homodimer. NH4(+) is required as a cofactor. K(+) serves as cofactor.

The protein resides in the cytoplasm. It catalyses the reaction (R)-pantothenate + ATP = (R)-4'-phosphopantothenate + ADP + H(+). Its pathway is cofactor biosynthesis; coenzyme A biosynthesis; CoA from (R)-pantothenate: step 1/5. Its function is as follows. Catalyzes the phosphorylation of pantothenate (Pan), the first step in CoA biosynthesis. This chain is Type III pantothenate kinase, found in Acidovorax ebreus (strain TPSY) (Diaphorobacter sp. (strain TPSY)).